The following is a 454-amino-acid chain: tRNA modification GTPase MnmE (454 aa).

(6S)-5-formyl-5,6,7,8-tetrahydrofolate is bound by residues arginine 23, glutamate 80, and lysine 120. In terms of domain architecture, TrmE-type G spans glycine 216–glycine 377. Asparagine 226 provides a ligand contact to K(+). Residues asparagine 226–serine 231, threonine 245–threonine 251, aspartate 270–glycine 273, asparagine 335–aspartate 338, and serine 358–arginine 360 contribute to the GTP site. Mg(2+) is bound at residue serine 230. Residues threonine 245, isoleucine 247, and threonine 250 each contribute to the K(+) site. Mg(2+) is bound at residue threonine 251. Lysine 454 contacts (6S)-5-formyl-5,6,7,8-tetrahydrofolate.

This sequence belongs to the TRAFAC class TrmE-Era-EngA-EngB-Septin-like GTPase superfamily. TrmE GTPase family. In terms of assembly, homodimer. Heterotetramer of two MnmE and two MnmG subunits. It depends on K(+) as a cofactor.

The protein resides in the cytoplasm. Its function is as follows. Exhibits a very high intrinsic GTPase hydrolysis rate. Involved in the addition of a carboxymethylaminomethyl (cmnm) group at the wobble position (U34) of certain tRNAs, forming tRNA-cmnm(5)s(2)U34. The chain is tRNA modification GTPase MnmE from Pectobacterium carotovorum subsp. carotovorum (strain PC1).